The primary structure comprises 432 residues: Homeobox protein Hox-D3 (432 aa).

Disordered stretches follow at residues 43–62 (YSTP…LDTD), 68–197 (CSIQ…SKRV), 253–280 (QKAK…AGHV), and 400–432 (HHGP…LTHL). Over residues 97 to 106 (NSQGGGGGSQ) the composition is skewed to gly residues. Over residues 116-131 (PPQPPPPPPTLPPSSP) the composition is skewed to pro residues. The segment covering 148-158 (NASSSSATISK) has biased composition (polar residues). Residues 160-165 (IFPWMK) carry the Antp-type hexapeptide motif. Residues 194-253 (SKRVRTAYTSAQLVELEKEFHFNRYLCRPRRVEMANLLNLTERQIKIWFQNRRMKYKKDQ) constitute a DNA-binding region (homeobox).

The protein belongs to the Antp homeobox family.

The protein resides in the nucleus. Its function is as follows. Sequence-specific transcription factor which is part of a developmental regulatory system that provides cells with specific positional identities on the anterior-posterior axis. This is Homeobox protein Hox-D3 (HOXD3) from Homo sapiens (Human).